Consider the following 747-residue polypeptide: Endoglucanase D (747 aa).

Residues 1–39 (MHSASRTRARTRVRTAVSGLLAATVLAAPLTLVAAPAQA) form the signal peptide. The Proton donor role is filled by E208. The active-site Nucleophile is the E349. The interval 456–475 (APTGLRAGTPTASTVPLTWS) is disordered. 2 Fibronectin type-III domains span residues 456-543 (APTG…TAAG) and 552-639 (VPTG…TAPD). Positions 465–475 (PTASTVPLTWS) are enriched in polar residues. Positions 638-747 (PDPTTGSCAV…TVGGATCTTR (110 aa)) constitute a CBM2 domain.

It belongs to the glycosyl hydrolase 5 (cellulase A) family.

The catalysed reaction is Endohydrolysis of (1-&gt;4)-beta-D-glucosidic linkages in cellulose, lichenin and cereal beta-D-glucans.. Its pathway is glycan metabolism; cellulose degradation. This chain is Endoglucanase D (cenD), found in Cellulomonas fimi.